Reading from the N-terminus, the 209-residue chain is Octanoyltransferase (209 aa).

In terms of domain architecture, BPL/LPL catalytic spans 30-209 (VNEPEIVYLV…IQTEFNKIFT (180 aa)). Substrate contacts are provided by residues 69–76 (RGGKFTFH), 143–145 (AIG), and 156–158 (GVA). Cys-174 acts as the Acyl-thioester intermediate in catalysis.

The protein belongs to the LipB family.

The protein localises to the cytoplasm. The catalysed reaction is octanoyl-[ACP] + L-lysyl-[protein] = N(6)-octanoyl-L-lysyl-[protein] + holo-[ACP] + H(+). Its pathway is protein modification; protein lipoylation via endogenous pathway; protein N(6)-(lipoyl)lysine from octanoyl-[acyl-carrier-protein]: step 1/2. Its function is as follows. Catalyzes the transfer of endogenously produced octanoic acid from octanoyl-acyl-carrier-protein onto the lipoyl domains of lipoate-dependent enzymes. Lipoyl-ACP can also act as a substrate although octanoyl-ACP is likely to be the physiological substrate. The sequence is that of Octanoyltransferase from Rickettsia canadensis (strain McKiel).